The following is a 181-amino-acid chain: Crossover junction endodeoxyribonuclease RuvC (181 aa).

Residues Asp8, Glu67, and Asp139 contribute to the active site. Mg(2+)-binding residues include Asp8, Glu67, and Asp139.

This sequence belongs to the RuvC family. In terms of assembly, homodimer which binds Holliday junction (HJ) DNA. The HJ becomes 2-fold symmetrical on binding to RuvC with unstacked arms; it has a different conformation from HJ DNA in complex with RuvA. In the full resolvosome a probable DNA-RuvA(4)-RuvB(12)-RuvC(2) complex forms which resolves the HJ. It depends on Mg(2+) as a cofactor.

It is found in the cytoplasm. It carries out the reaction Endonucleolytic cleavage at a junction such as a reciprocal single-stranded crossover between two homologous DNA duplexes (Holliday junction).. Its function is as follows. The RuvA-RuvB-RuvC complex processes Holliday junction (HJ) DNA during genetic recombination and DNA repair. Endonuclease that resolves HJ intermediates. Cleaves cruciform DNA by making single-stranded nicks across the HJ at symmetrical positions within the homologous arms, yielding a 5'-phosphate and a 3'-hydroxyl group; requires a central core of homology in the junction. The consensus cleavage sequence is 5'-(A/T)TT(C/G)-3'. Cleavage occurs on the 3'-side of the TT dinucleotide at the point of strand exchange. HJ branch migration catalyzed by RuvA-RuvB allows RuvC to scan DNA until it finds its consensus sequence, where it cleaves and resolves the cruciform DNA. The polypeptide is Crossover junction endodeoxyribonuclease RuvC (Acinetobacter baylyi (strain ATCC 33305 / BD413 / ADP1)).